Consider the following 753-residue polypeptide: 5-methyltetrahydropteroyltriglutamate--homocysteine methyltransferase (753 aa).

5-methyltetrahydropteroyltri-L-glutamate contacts are provided by residues 17 to 20 (RELK) and Lys117. Residues 431 to 433 (IGS) and Glu484 contribute to the L-homocysteine site. L-methionine-binding positions include 431–433 (IGS) and Glu484. Residues 515 to 516 (RC) and Trp561 each bind 5-methyltetrahydropteroyltri-L-glutamate. Asp599 serves as a coordination point for L-homocysteine. L-methionine is bound at residue Asp599. 5-methyltetrahydropteroyltri-L-glutamate is bound at residue Glu605. Zn(2+)-binding residues include His641, Cys643, and Glu665. His694 functions as the Proton donor in the catalytic mechanism. Cys726 provides a ligand contact to Zn(2+).

It belongs to the vitamin-B12 independent methionine synthase family. Zn(2+) serves as cofactor.

The enzyme catalyses 5-methyltetrahydropteroyltri-L-glutamate + L-homocysteine = tetrahydropteroyltri-L-glutamate + L-methionine. It functions in the pathway amino-acid biosynthesis; L-methionine biosynthesis via de novo pathway; L-methionine from L-homocysteine (MetE route): step 1/1. Its function is as follows. Catalyzes the transfer of a methyl group from 5-methyltetrahydrofolate to homocysteine resulting in methionine formation. This is 5-methyltetrahydropteroyltriglutamate--homocysteine methyltransferase from Shigella sonnei (strain Ss046).